A 187-amino-acid chain; its full sequence is Putative lipoprotein LppJ (187 aa).

Residues 1 to 28 (MPHSTADRRLRLTRQALLAAAVAPLLAG) form the signal peptide. Residue Cys-29 is the site of N-palmitoyl cysteine attachment. Cys-29 carries the S-diacylglycerol cysteine lipid modification.

The protein resides in the cell membrane. This chain is Putative lipoprotein LppJ (lppJ), found in Mycobacterium bovis (strain ATCC BAA-935 / AF2122/97).